Consider the following 714-residue polypeptide: EtfAB:quinone oxidoreductase (714 aa).

A run of 6 helical transmembrane segments spans residues tyrosine 25–tryptophan 45, alanine 87–isoleucine 107, isoleucine 125–leucine 145, aspartate 164–leucine 184, proline 207–tryptophan 227, and methionine 236–alanine 256. 2 consecutive 4Fe-4S ferredoxin-type domains span residues tryptophan 293 to lysine 324 and tyrosine 375 to lysine 405. Cysteine 302, cysteine 305, cysteine 308, cysteine 312, cysteine 386, cysteine 389, cysteine 392, and cysteine 396 together coordinate [4Fe-4S] cluster.

In terms of assembly, might constitute a membrane-associated complex with EtfA (Swol_0697), EtfB (Swol_0696), and the butyryl-CoA dehydrogenase Swol_1933 and/or Swol_2052. [4Fe-4S] cluster is required as a cofactor.

Its subcellular location is the cell membrane. Its pathway is lipid metabolism; butanoate metabolism. Oxidoreductase involved in syntrophic growth of S.wolfei with butyrate. Is presumed to link the electron flow from butyryl-CoA dehydrogenases to the membrane, in conjunction with the electron transfer flavoprotein EtfAB. May transfer electrons to the menaquinone pool of the membrane. This Syntrophomonas wolfei subsp. wolfei (strain DSM 2245B / Goettingen) protein is EtfAB:quinone oxidoreductase.